The sequence spans 312 residues: Ribosomal protein L11 methyltransferase (312 aa).

Residues Thr160, Gly181, Asp203, and Asn246 each coordinate S-adenosyl-L-methionine.

It belongs to the methyltransferase superfamily. PrmA family.

It localises to the cytoplasm. It carries out the reaction L-lysyl-[protein] + 3 S-adenosyl-L-methionine = N(6),N(6),N(6)-trimethyl-L-lysyl-[protein] + 3 S-adenosyl-L-homocysteine + 3 H(+). Functionally, methylates ribosomal protein L11. This chain is Ribosomal protein L11 methyltransferase, found in Staphylococcus epidermidis (strain ATCC 12228 / FDA PCI 1200).